The following is a 61-amino-acid chain: Phosphoenolpyruvate synthase (61 aa).

It belongs to the PEP-utilizing enzyme family. Mg(2+) is required as a cofactor.

The enzyme catalyses pyruvate + ATP + H2O = phosphoenolpyruvate + AMP + phosphate + 2 H(+). Its pathway is carbohydrate biosynthesis; gluconeogenesis. In terms of biological role, catalyzes the phosphorylation of pyruvate to phosphoenolpyruvate. The sequence is that of Phosphoenolpyruvate synthase (ppsA) from Enterobacter agglomerans (Erwinia herbicola).